The following is a 238-amino-acid chain: MRFKNRFQRFMNHRAPANGRYKPTCYEHAANCYTHAFLIVPAIVGSALLHRLSDDCWEKITAWIYGMGLCALFIVSTVFHIVSWKKSHLRTVEHCFHMCDRMVIYFFIAASYAPWLNLRELGPLASHMRWFIWLMAAGGTIYVFLYHEKYKVVELFFYLTMGFSPALVVTSMNNTDGLQELACGGLIYCLGVVFFKSDGIIPFAHAIWHLFVATAAAVHYYAIWKYLYRSPTDFMRHL.

The Cytoplasmic segment spans residues 1–28 (MRFKNRFQRFMNHRAPANGRYKPTCYEH). The helical transmembrane segment at 29–49 (AANCYTHAFLIVPAIVGSALL) threads the bilayer. At 50-61 (HRLSDDCWEKIT) the chain is on the lumenal side. The helical transmembrane segment at 62–82 (AWIYGMGLCALFIVSTVFHIV) threads the bilayer. Over 83–101 (SWKKSHLRTVEHCFHMCDR) the chain is Cytoplasmic. Residues 102–122 (MVIYFFIAASYAPWLNLRELG) traverse the membrane as a helical segment. Topologically, residues 123 to 124 (PL) are lumenal. The chain crosses the membrane as a helical span at residues 125 to 145 (ASHMRWFIWLMAAGGTIYVFL). The Cytoplasmic portion of the chain corresponds to 146–151 (YHEKYK). Residues 152 to 172 (VVELFFYLTMGFSPALVVTSM) form a helical membrane-spanning segment. At 173-174 (NN) the chain is on the lumenal side. A helical transmembrane segment spans residues 175–195 (TDGLQELACGGLIYCLGVVFF). Residues 196–198 (KSD) are Cytoplasmic-facing. Residues 199 to 219 (GIIPFAHAIWHLFVATAAAVH) traverse the membrane as a helical segment. Topologically, residues 220 to 238 (YYAIWKYLYRSPTDFMRHL) are lumenal.

Belongs to the ADIPOR family. In terms of tissue distribution, exhibits relatively ubiquitous expression with preferential expression in mature (in vitro differentiated) macrophages.

The protein localises to the late endosome membrane. The protein resides in the lysosome membrane. Its function is as follows. Involved in the dynamics of lysosomal membranes associated with microglial activation following brain lesion. The protein is Monocyte to macrophage differentiation factor of Homo sapiens (Human).